We begin with the raw amino-acid sequence, 571 residues long: Kelch-like protein 28 (571 aa).

The 68-residue stretch at 35–102 (CDIILRVGDV…AYTGTVFISQ (68 aa)) folds into the BTB domain. Kelch repeat units follow at residues 284–331 (VLCA…VLDQ), 332–386 (KVYV…VLAG), 387–433 (ELYA…VLDG), 435–479 (IYAI…VMLG), 480–526 (FIFV…VIDN), and 528–570 (LYVV…GLTA).

The sequence is that of Kelch-like protein 28 (KLHL28) from Homo sapiens (Human).